The following is a 199-amino-acid chain: Recombination protein RecR (199 aa).

The segment at 58 to 73 adopts a C4-type zinc-finger fold; that stretch reads CSACGNVDTQDPCAIC. The 96-residue stretch at 81-176 folds into the Toprim domain; the sequence is HILCIVEEVG…SVSRLAHGVP (96 aa).

It belongs to the RecR family.

May play a role in DNA repair. It seems to be involved in an RecBC-independent recombinational process of DNA repair. It may act with RecF and RecO. The sequence is that of Recombination protein RecR from Parvibaculum lavamentivorans (strain DS-1 / DSM 13023 / NCIMB 13966).